A 244-amino-acid polypeptide reads, in one-letter code: Leucyl/phenylalanyl-tRNA--protein transferase (244 aa).

The protein belongs to the L/F-transferase family.

The protein localises to the cytoplasm. It carries out the reaction N-terminal L-lysyl-[protein] + L-leucyl-tRNA(Leu) = N-terminal L-leucyl-L-lysyl-[protein] + tRNA(Leu) + H(+). The catalysed reaction is N-terminal L-arginyl-[protein] + L-leucyl-tRNA(Leu) = N-terminal L-leucyl-L-arginyl-[protein] + tRNA(Leu) + H(+). The enzyme catalyses L-phenylalanyl-tRNA(Phe) + an N-terminal L-alpha-aminoacyl-[protein] = an N-terminal L-phenylalanyl-L-alpha-aminoacyl-[protein] + tRNA(Phe). Its function is as follows. Functions in the N-end rule pathway of protein degradation where it conjugates Leu, Phe and, less efficiently, Met from aminoacyl-tRNAs to the N-termini of proteins containing an N-terminal arginine or lysine. In Thermodesulfovibrio yellowstonii (strain ATCC 51303 / DSM 11347 / YP87), this protein is Leucyl/phenylalanyl-tRNA--protein transferase.